Here is a 163-residue protein sequence, read N- to C-terminus: MPSFDIVSEITLHEVRNAVENANRVLSTRYDFRGVEAVIELNEKNETIKITTESDFQLEQLIEILIGSCIKRGIEHSSLDIPAESEHHGKLYSKEIKLKQGIETEMAKKITKLVKDSKIKVQTQIQGEQVRVTGKSRDDLQAVIQLVKSAELGQPFQFNNFRD.

This sequence belongs to the YajQ family.

Functionally, nucleotide-binding protein. The polypeptide is Nucleotide-binding protein NTHI1194 (Haemophilus influenzae (strain 86-028NP)).